Consider the following 151-residue polypeptide: Pseudo histidine-containing phosphotransfer protein 2 (151 aa).

The region spanning 38-133 (SPNFVEEVAA…ATLKQKLESY (96 aa)) is the HPt domain.

Functions as a two-component phosphorelay mediator between cytokinin sensor histidine kinases and response regulators (B-type ARRs). Plays an important role in propagating cytokinin signal transduction. This chain is Pseudo histidine-containing phosphotransfer protein 2, found in Oryza sativa subsp. japonica (Rice).